The primary structure comprises 420 residues: Serine hydroxymethyltransferase (420 aa).

Residues Leu121 and 125 to 127 (GHL) contribute to the (6S)-5,6,7,8-tetrahydrofolate site. Lys230 carries the N6-(pyridoxal phosphate)lysine modification.

Belongs to the SHMT family. In terms of assembly, homodimer. Pyridoxal 5'-phosphate serves as cofactor.

The protein resides in the cytoplasm. It catalyses the reaction (6R)-5,10-methylene-5,6,7,8-tetrahydrofolate + glycine + H2O = (6S)-5,6,7,8-tetrahydrofolate + L-serine. The protein operates within one-carbon metabolism; tetrahydrofolate interconversion. It functions in the pathway amino-acid biosynthesis; glycine biosynthesis; glycine from L-serine: step 1/1. Catalyzes the reversible interconversion of serine and glycine with tetrahydrofolate (THF) serving as the one-carbon carrier. This reaction serves as the major source of one-carbon groups required for the biosynthesis of purines, thymidylate, methionine, and other important biomolecules. Also exhibits THF-independent aldolase activity toward beta-hydroxyamino acids, producing glycine and aldehydes, via a retro-aldol mechanism. The sequence is that of Serine hydroxymethyltransferase from Streptomyces avermitilis (strain ATCC 31267 / DSM 46492 / JCM 5070 / NBRC 14893 / NCIMB 12804 / NRRL 8165 / MA-4680).